Consider the following 117-residue polypeptide: MTRVRRGYIARRRRTKIRLFASTFRGAHSRLTRTITQQKMRALVSTHRDRGRQKINFRRLWITRINAVTRENRVSYSYSRLIHDLYKRQLLLNRKIPAQIAISNRNCLYTISSEIIK.

It belongs to the bacterial ribosomal protein bL20 family.

The protein resides in the plastid. It is found in the chloroplast. Functionally, binds directly to 23S ribosomal RNA and is necessary for the in vitro assembly process of the 50S ribosomal subunit. It is not involved in the protein synthesizing functions of that subunit. This is Large ribosomal subunit protein bL20c from Chloranthus spicatus (Chulantree).